The chain runs to 1226 residues: Methionine synthase (1226 aa).

Residues 6–326 (RAQIEAQLKQ…EHIRHMAMAV (321 aa)) enclose the Hcy-binding domain. The Zn(2+) site is built by Cys248, Cys311, and Cys312. In terms of domain architecture, Pterin-binding spans 357–618 (FVNVGERTNV…VPEKLREAVE (262 aa)). Residues 651 to 745 (SALEWRTWSV…FINASKQVGS (95 aa)) form the B12-binding N-terminal domain. Methylcob(III)alamin contacts are provided by residues Glu695, 757–761 (GDVHD), His760, Ser805, Thr809, and Ala861. The 136-residue stretch at 747–882 (NGKILLATVK…SDELRPAFVE (136 aa)) folds into the B12-binding domain. In terms of domain architecture, AdoMet activation spans 898–1226 (KKPRTKPVTL…EKWLGPNING (329 aa)). S-adenosyl-L-methionine is bound by residues Asp948, Arg1136, and 1191–1192 (YF).

The protein belongs to the vitamin-B12 dependent methionine synthase family. Requires methylcob(III)alamin as cofactor. It depends on Zn(2+) as a cofactor.

It catalyses the reaction (6S)-5-methyl-5,6,7,8-tetrahydrofolate + L-homocysteine = (6S)-5,6,7,8-tetrahydrofolate + L-methionine. Its pathway is amino-acid biosynthesis; L-methionine biosynthesis via de novo pathway; L-methionine from L-homocysteine (MetH route): step 1/1. Functionally, catalyzes the transfer of a methyl group from methyl-cobalamin to homocysteine, yielding enzyme-bound cob(I)alamin and methionine. Subsequently, remethylates the cofactor using methyltetrahydrofolate. In Vibrio vulnificus (strain YJ016), this protein is Methionine synthase (metH).